Reading from the N-terminus, the 501-residue chain is Probable pectate lyase 13 (501 aa).

Positions 1–22 are cleaved as a signal peptide; the sequence is MLLQNFSNTIFLLCLFFTLLSA. 2 N-linked (GlcNAc...) asparagine glycosylation sites follow: asparagine 27 and asparagine 49. The segment at 55–78 is disordered; the sequence is RQLSSPSSSSSSSSSSSSSSCRTG. Residues 58 to 74 show a composition bias toward low complexity; the sequence is SSPSSSSSSSSSSSSSS. Positions 217, 241, and 245 each coordinate Ca(2+). The active site involves arginine 297. Disordered stretches follow at residues 329 to 359 and 408 to 463; these read INSQ…DGEW and NAGV…SSGD. Positions 343–357 are enriched in basic and acidic residues; sequence SAKEVTKRVDSKDDG. The span at 430 to 449 shows a compositional bias: gly residues; it reads GGDGGGGGSSGGSSGGGMDV. The segment covering 450-463 has biased composition (low complexity); sequence MGGTTRGSSSSSGD. Serine 474 carries GPI-anchor amidated serine lipidation. A propeptide spans 475–501 (removed in mature form); it reads DAPSRPRLTLLFSLLMISVLSLSTLLL.

It belongs to the polysaccharide lyase 1 family. It depends on Ca(2+) as a cofactor. In terms of tissue distribution, expressed equally in mature leaves, buds, flowers, rosettes and roots.

It localises to the cell membrane. It carries out the reaction Eliminative cleavage of (1-&gt;4)-alpha-D-galacturonan to give oligosaccharides with 4-deoxy-alpha-D-galact-4-enuronosyl groups at their non-reducing ends.. It functions in the pathway glycan metabolism; pectin degradation; 2-dehydro-3-deoxy-D-gluconate from pectin: step 2/5. In terms of biological role, susceptibility factor required for infection by most powdery mildews, but not by unrelated pathogens. Exact function not known, but clearly affects cell wall composition. This is Probable pectate lyase 13 (PMR6) from Arabidopsis thaliana (Mouse-ear cress).